The sequence spans 286 residues: NAD kinase (286 aa).

The active-site Proton acceptor is the Asp-74. Residues 74–75 (DG), 148–149 (ND), Asp-178, Ala-186, 189–194 (TAYNLS), and Gln-244 contribute to the NAD(+) site.

It belongs to the NAD kinase family. It depends on a divalent metal cation as a cofactor.

Its subcellular location is the cytoplasm. It catalyses the reaction NAD(+) + ATP = ADP + NADP(+) + H(+). Functionally, involved in the regulation of the intracellular balance of NAD and NADP, and is a key enzyme in the biosynthesis of NADP. Catalyzes specifically the phosphorylation on 2'-hydroxyl of the adenosine moiety of NAD to yield NADP. The sequence is that of NAD kinase from Campylobacter jejuni subsp. jejuni serotype O:2 (strain ATCC 700819 / NCTC 11168).